Reading from the N-terminus, the 798-residue chain is Penicillin-binding protein 1A (798 aa).

Residues 1–9 (MIKKIITTC) are Cytoplasmic-facing. The chain crosses the membrane as a helical; Signal-anchor for type II membrane protein span at residues 10–30 (MGLNNGLALFGVGLIAIAILV). Residues 31–798 (TYPKLPSLDS…NNRQQLDSLF (768 aa)) are Periplasmic-facing. The transglycosylase stretch occupies residues 50 to 218 (LTIYSSDGQV…SAYNPIVNPE (169 aa)). Glu88 (proton donor; for transglycosylase activity) is an active-site residue. The transpeptidase stretch occupies residues 413 to 699 (TVVQEPLLQG…GTIAVPVWVE (287 aa)). Ser460 acts as the Acyl-ester intermediate; for transpeptidase activity in catalysis. The segment at 734-798 (TSSDLALDNS…NNRQQLDSLF (65 aa)) is disordered. The segment covering 782-798 (LPSNTGNNNRQQLDSLF) has biased composition (polar residues).

The protein in the N-terminal section; belongs to the glycosyltransferase 51 family. This sequence in the C-terminal section; belongs to the transpeptidase family.

It is found in the cell inner membrane. It catalyses the reaction [GlcNAc-(1-&gt;4)-Mur2Ac(oyl-L-Ala-gamma-D-Glu-L-Lys-D-Ala-D-Ala)](n)-di-trans,octa-cis-undecaprenyl diphosphate + beta-D-GlcNAc-(1-&gt;4)-Mur2Ac(oyl-L-Ala-gamma-D-Glu-L-Lys-D-Ala-D-Ala)-di-trans,octa-cis-undecaprenyl diphosphate = [GlcNAc-(1-&gt;4)-Mur2Ac(oyl-L-Ala-gamma-D-Glu-L-Lys-D-Ala-D-Ala)](n+1)-di-trans,octa-cis-undecaprenyl diphosphate + di-trans,octa-cis-undecaprenyl diphosphate + H(+). The enzyme catalyses Preferential cleavage: (Ac)2-L-Lys-D-Ala-|-D-Ala. Also transpeptidation of peptidyl-alanyl moieties that are N-acyl substituents of D-alanine.. It functions in the pathway cell wall biogenesis; peptidoglycan biosynthesis. In terms of biological role, cell wall formation. Synthesis of cross-linked peptidoglycan from the lipid intermediates. The enzyme has a penicillin-insensitive transglycosylase N-terminal domain (formation of linear glycan strands) and a penicillin-sensitive transpeptidase C-terminal domain (cross-linking of the peptide subunits). The polypeptide is Penicillin-binding protein 1A (mrcA) (Neisseria flavescens).